Here is a 210-residue protein sequence, read N- to C-terminus: FMN-dependent NADH:quinone oxidoreductase 9 (210 aa).

Residues Ser10 and 16–18 (SAS) each bind FMN.

This sequence belongs to the azoreductase type 1 family. In terms of assembly, homodimer. FMN is required as a cofactor.

It carries out the reaction 2 a quinone + NADH + H(+) = 2 a 1,4-benzosemiquinone + NAD(+). The enzyme catalyses N,N-dimethyl-1,4-phenylenediamine + anthranilate + 2 NAD(+) = 2-(4-dimethylaminophenyl)diazenylbenzoate + 2 NADH + 2 H(+). In terms of biological role, quinone reductase that provides resistance to thiol-specific stress caused by electrophilic quinones. Functionally, also exhibits azoreductase activity. Catalyzes the reductive cleavage of the azo bond in aromatic azo compounds to the corresponding amines. The sequence is that of FMN-dependent NADH:quinone oxidoreductase 9 from Burkholderia lata (strain ATCC 17760 / DSM 23089 / LMG 22485 / NCIMB 9086 / R18194 / 383).